A 109-amino-acid chain; its full sequence is uncharacterized protein (109 aa).

The stretch at 27-89 forms a coiled coil; sequence KEEAHQFRDK…LKRIDELIAV (63 aa).

This is an uncharacterized protein from Streptococcus pneumoniae.